We begin with the raw amino-acid sequence, 679 residues long: Mitotic interactor and substrate of PLK1 (679 aa).

Position 78 is a phosphoserine; by CDK1; in vitro (Ser-78). Disordered stretches follow at residues Ala-151 to Glu-182 and Ala-206 to Val-245. The segment covering Arg-153–Gly-163 has biased composition (polar residues). Ser-156 is modified (phosphoserine). Residues Thr-164 and Thr-172 each carry the phosphothreonine; by CDK1; in vitro modification. Thr-179 is modified (phosphothreonine). Ser-214 is subject to Phosphoserine; by CDK1; in vitro. Phosphothreonine is present on Thr-219. Thr-224 carries the phosphothreonine; by CDK1; in vitro modification. Phosphoserine; by CDK1; in vitro is present on Ser-284. Thr-287 bears the Phosphothreonine; by CDK1; in vitro mark. Ser-348 bears the Phosphoserine mark. Residues Gln-360 to His-371 show a composition bias toward basic and acidic residues. Residues Gln-360–Arg-419 are disordered. Residue Thr-377 is modified to Phosphothreonine; by CDK1; in vitro. Ser-382 bears the Phosphoserine; by CDK1; in vitro mark. A phosphoserine; by PLK1; in vitro mark is found at Ser-394, Ser-395, and Ser-397. Position 400 is a phosphoserine (Ser-400). Residues Pro-401–Ala-411 show a composition bias toward low complexity. Position 430 is a phosphoserine (Ser-430). The tract at residues Pro-447–Ala-494 is disordered. Ser-471 carries the phosphoserine; by PLK1; in vitro modification. Residues Glu-472 to Gln-482 show a composition bias toward polar residues. Ser-541 and Ser-543 each carry phosphoserine. Residues Asp-545–Leu-569 are a coiled coil. A compositionally biased stretch (basic and acidic residues) spans Arg-557–Asn-567. Disordered stretches follow at residues Arg-557–Ser-598 and Asp-622–Pro-643. Ser-575 carries the phosphoserine; by CDK1; in vitro modification. Thr-577 is subject to Phosphothreonine. Phosphoserine; by PLK1; in vitro is present on residues Ser-582 and Ser-586. Residues Asp-583–Ser-593 show a composition bias toward low complexity. Ser-675 carries the phosphoserine modification.

It belongs to the MISP family. Associates with F-actin. Interacts with DCTN1; this interaction regulates DCTN1 distribution at the cell cortex. Interacts with PTK2/FAK and MAPRE1. Phosphorylated by CDK1 and PLK1. CDK1 is the priming kinase for PLK1 phosphorylation. Phosphorylation by PLK1 is required for proper spindle orientation at metaphase.

Its subcellular location is the cell junction. The protein resides in the focal adhesion. The protein localises to the cytoplasm. It localises to the cytoskeleton. It is found in the cell cortex. Functionally, plays a role in mitotic spindle orientation and mitotic progression. Regulates the distribution of dynactin at the cell cortex in a PLK1-dependent manner, thus stabilizing cortical and astral microtubule attachments required for proper mitotic spindle positioning. May link microtubules to the actin cytospkeleton and focal adhesions. May be required for directed cell migration and centrosome orientation. May also be necessary for proper stacking of the Golgi apparatus. The protein is Mitotic interactor and substrate of PLK1 of Homo sapiens (Human).